Reading from the N-terminus, the 74-residue chain is DNA-directed RNA polymerase subunit omega (74 aa).

It belongs to the RNA polymerase subunit omega family. In terms of assembly, the RNAP catalytic core consists of 2 alpha, 1 beta, 1 beta' and 1 omega subunit. When a sigma factor is associated with the core the holoenzyme is formed, which can initiate transcription.

The enzyme catalyses RNA(n) + a ribonucleoside 5'-triphosphate = RNA(n+1) + diphosphate. Promotes RNA polymerase assembly. Latches the N- and C-terminal regions of the beta' subunit thereby facilitating its interaction with the beta and alpha subunits. The protein is DNA-directed RNA polymerase subunit omega of Helicobacter pylori (strain P12).